Here is a 591-residue protein sequence, read N- to C-terminus: V-type ATP synthase alpha chain (591 aa).

242 to 249 is an ATP binding site; sequence GPFGAGKT.

The protein belongs to the ATPase alpha/beta chains family.

It carries out the reaction ATP + H2O + 4 H(+)(in) = ADP + phosphate + 5 H(+)(out). Its function is as follows. Produces ATP from ADP in the presence of a proton gradient across the membrane. The V-type alpha chain is a catalytic subunit. This Chlamydia pneumoniae (Chlamydophila pneumoniae) protein is V-type ATP synthase alpha chain (atpA).